The following is a 363-amino-acid chain: Insulin gene enhancer protein ISL-3 (363 aa).

LIM zinc-binding domains follow at residues 27–80 (CVGC…CKRD) and 89–143 (CAKC…RADH). Residues 191 to 250 (TTRVRTVLNEKQLHTLRTCYNANPRPDALMREQLVEMTGLSPRVIRVWFQNKRCKDKKRS) constitute a DNA-binding region (homeobox). The disordered stretch occupies residues 328–363 (FSESGSLGNSSGSDVTSLSSHLPDTPNSMVPSPVET). The segment covering 329–340 (SESGSLGNSSGS) has biased composition (low complexity). Over residues 341 to 363 (DVTSLSSHLPDTPNSMVPSPVET) the composition is skewed to polar residues.

The protein resides in the nucleus. Its function is as follows. Binds to one of the cis-acting domain of the insulin gene enhancer. May be involved in subtype specialization of primary motoneurons. In Oncorhynchus tshawytscha (Chinook salmon), this protein is Insulin gene enhancer protein ISL-3 (isl3).